A 171-amino-acid chain; its full sequence is Sec-independent protein translocase protein TatB (171 aa).

A helical transmembrane segment spans residues 1 to 21 (MFDIGFSELLLVFIIGLVVLG). Residues 117 to 171 (KDNEAAHEGVTPAAAQTQASSPEQKPETTPEPVVKPAADAEPKTAAPSPSSSDKP) are disordered. A compositionally biased stretch (polar residues) spans 130–139 (AAQTQASSPE).

This sequence belongs to the TatB family. The Tat system comprises two distinct complexes: a TatABC complex, containing multiple copies of TatA, TatB and TatC subunits, and a separate TatA complex, containing only TatA subunits. Substrates initially bind to the TatABC complex, which probably triggers association of the separate TatA complex to form the active translocon.

The protein localises to the cell inner membrane. Part of the twin-arginine translocation (Tat) system that transports large folded proteins containing a characteristic twin-arginine motif in their signal peptide across membranes. Together with TatC, TatB is part of a receptor directly interacting with Tat signal peptides. TatB may form an oligomeric binding site that transiently accommodates folded Tat precursor proteins before their translocation. The chain is Sec-independent protein translocase protein TatB from Escherichia coli O157:H7.